The sequence spans 720 residues: 1-deoxy-D-xylulose-5-phosphate synthase 1, chloroplastic (720 aa).

A chloroplast-targeting transit peptide spans 1-51 (MALTTFSISRGGFVGALPQEGHFAPAAAELSLHKLQSRPHKARRRSSSSIS). The segment covering 35-46 (LQSRPHKARRRS) has biased composition (basic residues). Positions 35–74 (LQSRPHKARRRSSSSISASLSTEREAAEYHSQRPPTPLLD) are disordered. Basic and acidic residues predominate over residues 56–65 (TEREAAEYHS). Thiamine diphosphate contacts are provided by residues His142 and 183 to 185 (GHS). Mg(2+) is bound at residue Asp214. Thiamine diphosphate-binding positions include 215 to 216 (GA), Asn243, Tyr364, and Glu446. Mg(2+) is bound at residue Asn243.

It belongs to the transketolase family. DXPS subfamily. Homodimer. Mg(2+) serves as cofactor. Requires thiamine diphosphate as cofactor.

Its subcellular location is the plastid. It localises to the chloroplast stroma. It carries out the reaction D-glyceraldehyde 3-phosphate + pyruvate + H(+) = 1-deoxy-D-xylulose 5-phosphate + CO2. It functions in the pathway metabolic intermediate biosynthesis; 1-deoxy-D-xylulose 5-phosphate biosynthesis; 1-deoxy-D-xylulose 5-phosphate from D-glyceraldehyde 3-phosphate and pyruvate: step 1/1. Catalyzes the acyloin condensation reaction between C atoms 2 and 3 of pyruvate and glyceraldehyde 3-phosphate to yield 1-deoxy-D-xylulose-5-phosphate (DXP). Is a limiting enzyme for plastidic isoprenoid biosynthesis and essential for chloroplast development. This is 1-deoxy-D-xylulose-5-phosphate synthase 1, chloroplastic (CLA1) from Oryza sativa subsp. japonica (Rice).